The chain runs to 329 residues: Protoheme IX farnesyltransferase (329 aa).

Helical transmembrane passes span 61–81, 108–128, 130–150, 158–178, 186–206, 243–263, and 284–304; these read LACTLGGGALAAAAAGVLNCL, AFLIAVALACGASLLLVAGVN, LAAGLSLLGLCSYVLLYTIVL, IVIGGVAGAIPPLVGAAAATG, WLFGLVMLWTPAHFWALALLL, LLGVLTLPSGGLFYGLMVLPF, and AKGLFRWSILYLFGICLLLLL.

Belongs to the UbiA prenyltransferase family. Protoheme IX farnesyltransferase subfamily.

The protein localises to the cell inner membrane. It catalyses the reaction heme b + (2E,6E)-farnesyl diphosphate + H2O = Fe(II)-heme o + diphosphate. It functions in the pathway porphyrin-containing compound metabolism; heme O biosynthesis; heme O from protoheme: step 1/1. Converts heme B (protoheme IX) to heme O by substitution of the vinyl group on carbon 2 of heme B porphyrin ring with a hydroxyethyl farnesyl side group. The sequence is that of Protoheme IX farnesyltransferase from Synechococcus sp. (strain RCC307).